We begin with the raw amino-acid sequence, 308 residues long: MLTTLLQSDLPGLPLRHCGKVRDVFDIPHKRLPVDTRSGEYLLIVATDRLSAFDVVLPDPIPGKGEILCQISNFWFQKTEHLMPNHLTGINVASVLPDGIDKTLYTQRAVVTKKLKPVRIEAIARGYLIGSGWKDYQRTGKVSGIQLPDGLQEAEKLPDPIFTPSTKAAVGHHDENIDFDTTVKMVGAELAERVRDATLRIYHFAAKYAAECGILLADTKFEFGTDIDGRLYVMDEMLTPDSSRYWPIDEYQVGTSPPSYDKQFVRNYLETLDWDKTAPGPTLPQDIIDRTRAKYTKALQQLAGINID.

This sequence belongs to the SAICAR synthetase family.

It catalyses the reaction 5-amino-1-(5-phospho-D-ribosyl)imidazole-4-carboxylate + L-aspartate + ATP = (2S)-2-[5-amino-1-(5-phospho-beta-D-ribosyl)imidazole-4-carboxamido]succinate + ADP + phosphate + 2 H(+). It participates in purine metabolism; IMP biosynthesis via de novo pathway; 5-amino-1-(5-phospho-D-ribosyl)imidazole-4-carboxamide from 5-amino-1-(5-phospho-D-ribosyl)imidazole-4-carboxylate: step 1/2. This is Phosphoribosylaminoimidazole-succinocarboxamide synthase from Xylella fastidiosa (strain 9a5c).